We begin with the raw amino-acid sequence, 407 residues long: Argininosuccinate synthase (407 aa).

ATP-binding positions include 12–20 (AYSGGLDTS) and A39. The L-citrulline site is built by Y92 and S97. Residue G122 coordinates ATP. L-aspartate is bound by residues T124, N128, and D129. N128 is an L-citrulline binding site. L-citrulline contacts are provided by R132, S182, S191, E267, and Y279.

The protein belongs to the argininosuccinate synthase family. Type 1 subfamily. In terms of assembly, homotetramer.

The protein resides in the cytoplasm. The catalysed reaction is L-citrulline + L-aspartate + ATP = 2-(N(omega)-L-arginino)succinate + AMP + diphosphate + H(+). Its pathway is amino-acid biosynthesis; L-arginine biosynthesis; L-arginine from L-ornithine and carbamoyl phosphate: step 2/3. This Campylobacter fetus subsp. fetus (strain 82-40) protein is Argininosuccinate synthase.